Reading from the N-terminus, the 163-residue chain is I-Kappa-B like protein N3 (163 aa).

ANK repeat units lie at residues 62–95 (LGDT…NLNT) and 100–130 (NGDT…NLQT).

Belongs to the polydnaviridae I-Kappa-B like protein family.

Functionally, suppresses the host immune response through NF-kappa-B inactivation. Possesses ankyrin repeat domains required for NF-kappa-B binding but lacks the regulatory regions required for dissociation from NF-kappa-B and degradation. Therefore, prevents host NF-kappa-B release and subsequent activation. This is I-Kappa-B like protein N3 (N6) from Microplitis demolitor (Parasitoid wasp).